The primary structure comprises 505 residues: N-succinylglutamate 5-semialdehyde dehydrogenase (505 aa).

234-239 (GSAHTG) is an NAD(+) binding site. Catalysis depends on residues Glu257 and Cys291.

The protein belongs to the aldehyde dehydrogenase family. AstD subfamily.

The catalysed reaction is N-succinyl-L-glutamate 5-semialdehyde + NAD(+) + H2O = N-succinyl-L-glutamate + NADH + 2 H(+). The protein operates within amino-acid degradation; L-arginine degradation via AST pathway; L-glutamate and succinate from L-arginine: step 4/5. In terms of biological role, catalyzes the NAD-dependent reduction of succinylglutamate semialdehyde into succinylglutamate. The polypeptide is N-succinylglutamate 5-semialdehyde dehydrogenase (Yersinia pestis (strain Pestoides F)).